Consider the following 187-residue polypeptide: UPF0301 protein Shewmr7_1270 (187 aa).

This sequence belongs to the UPF0301 (AlgH) family.

This is UPF0301 protein Shewmr7_1270 from Shewanella sp. (strain MR-7).